Reading from the N-terminus, the 289-residue chain is 4-hydroxy-tetrahydrodipicolinate synthase (289 aa).

Thr-46 contacts pyruvate. Tyr-134 serves as the catalytic Proton donor/acceptor. Residue Lys-162 is the Schiff-base intermediate with substrate of the active site. Val-204 provides a ligand contact to pyruvate.

The protein belongs to the DapA family. Homotetramer; dimer of dimers.

It is found in the cytoplasm. It catalyses the reaction L-aspartate 4-semialdehyde + pyruvate = (2S,4S)-4-hydroxy-2,3,4,5-tetrahydrodipicolinate + H2O + H(+). Its pathway is amino-acid biosynthesis; L-lysine biosynthesis via DAP pathway; (S)-tetrahydrodipicolinate from L-aspartate: step 3/4. Catalyzes the condensation of (S)-aspartate-beta-semialdehyde [(S)-ASA] and pyruvate to 4-hydroxy-tetrahydrodipicolinate (HTPA). The protein is 4-hydroxy-tetrahydrodipicolinate synthase of Bacillus velezensis (strain DSM 23117 / BGSC 10A6 / LMG 26770 / FZB42) (Bacillus amyloliquefaciens subsp. plantarum).